The sequence spans 206 residues: Histidine biosynthesis bifunctional protein HisIE (206 aa).

Residues 1–117 (MGSETTAAGD…SCFPTAPSQF (117 aa)) are phosphoribosyl-AMP cyclohydrolase. The phosphoribosyl-ATP pyrophosphohydrolase stretch occupies residues 118–206 (LGSLDALIAE…AVALLESRHK (89 aa)).

The protein in the N-terminal section; belongs to the PRA-CH family. This sequence in the C-terminal section; belongs to the PRA-PH family.

It localises to the cytoplasm. It catalyses the reaction 1-(5-phospho-beta-D-ribosyl)-ATP + H2O = 1-(5-phospho-beta-D-ribosyl)-5'-AMP + diphosphate + H(+). It carries out the reaction 1-(5-phospho-beta-D-ribosyl)-5'-AMP + H2O = 1-(5-phospho-beta-D-ribosyl)-5-[(5-phospho-beta-D-ribosylamino)methylideneamino]imidazole-4-carboxamide. It functions in the pathway amino-acid biosynthesis; L-histidine biosynthesis; L-histidine from 5-phospho-alpha-D-ribose 1-diphosphate: step 2/9. Its pathway is amino-acid biosynthesis; L-histidine biosynthesis; L-histidine from 5-phospho-alpha-D-ribose 1-diphosphate: step 3/9. This chain is Histidine biosynthesis bifunctional protein HisIE, found in Xanthomonas campestris pv. campestris (strain ATCC 33913 / DSM 3586 / NCPPB 528 / LMG 568 / P 25).